A 142-amino-acid chain; its full sequence is Large ribosomal subunit protein uL13 (142 aa).

This sequence belongs to the universal ribosomal protein uL13 family. As to quaternary structure, part of the 50S ribosomal subunit.

This protein is one of the early assembly proteins of the 50S ribosomal subunit, although it is not seen to bind rRNA by itself. It is important during the early stages of 50S assembly. The protein is Large ribosomal subunit protein uL13 of Aliivibrio fischeri (strain ATCC 700601 / ES114) (Vibrio fischeri).